A 364-amino-acid chain; its full sequence is Anhydro-N-acetylmuramic acid kinase (364 aa).

11–18 (GSSLDGID) is a binding site for ATP.

Belongs to the anhydro-N-acetylmuramic acid kinase family.

It catalyses the reaction 1,6-anhydro-N-acetyl-beta-muramate + ATP + H2O = N-acetyl-D-muramate 6-phosphate + ADP + H(+). Its pathway is amino-sugar metabolism; 1,6-anhydro-N-acetylmuramate degradation. It participates in cell wall biogenesis; peptidoglycan recycling. Catalyzes the specific phosphorylation of 1,6-anhydro-N-acetylmuramic acid (anhMurNAc) with the simultaneous cleavage of the 1,6-anhydro ring, generating MurNAc-6-P. Is required for the utilization of anhMurNAc either imported from the medium or derived from its own cell wall murein, and thus plays a role in cell wall recycling. This Pseudomonas syringae pv. tomato (strain ATCC BAA-871 / DC3000) protein is Anhydro-N-acetylmuramic acid kinase.